A 279-amino-acid polypeptide reads, in one-letter code: Fatty acid metabolism regulator protein (279 aa).

The 69-residue stretch at 6–74 (KSPAGFAEKY…HGKPTKVNQF (69 aa)) folds into the HTH gntR-type domain. Residues 34-53 (ERELSELIGVTRTTLREVLQ) constitute a DNA-binding region (H-T-H motif).

As to quaternary structure, homodimer.

It is found in the cytoplasm. Its function is as follows. Multifunctional regulator of fatty acid metabolism. In Vibrio cholerae serotype O1 (strain ATCC 39541 / Classical Ogawa 395 / O395), this protein is Fatty acid metabolism regulator protein.